The following is a 596-amino-acid chain: Ferredoxin--nitrite reductase, chloroplastic (596 aa).

The N-terminal 28 residues, 1 to 28 (MASSASLQRFLPPYPHAAASRCRPPGVR), are a transit peptide targeting the chloroplast. The interval 1 to 56 (MASSASLQRFLPPYPHAAASRCRPPGVRARPVQSSTVSAPSSSTPAADEAVSAERL) is disordered. Residues 31 to 47 (PVQSSTVSAPSSSTPAA) are compositionally biased toward low complexity. [4Fe-4S] cluster-binding residues include Cys474, Cys480, Cys515, and Cys519. Cys519 serves as a coordination point for siroheme.

Belongs to the nitrite and sulfite reductase 4Fe-4S domain family. Monomer. Requires siroheme as cofactor. It depends on [4Fe-4S] cluster as a cofactor.

It localises to the plastid. The protein resides in the chloroplast. It carries out the reaction 6 oxidized [2Fe-2S]-[ferredoxin] + NH4(+) + 2 H2O = nitrite + 6 reduced [2Fe-2S]-[ferredoxin] + 8 H(+). It participates in nitrogen metabolism; nitrate reduction (assimilation). In terms of biological role, catalyzes the six-electron reduction of nitrite to ammonium. The chain is Ferredoxin--nitrite reductase, chloroplastic from Oryza sativa subsp. japonica (Rice).